The primary structure comprises 432 residues: Glutamate-1-semialdehyde 2,1-aminomutase 2 (432 aa).

Residue Lys-268 is modified to N6-(pyridoxal phosphate)lysine.

It belongs to the class-III pyridoxal-phosphate-dependent aminotransferase family. HemL subfamily. In terms of assembly, homodimer. Pyridoxal 5'-phosphate is required as a cofactor.

It is found in the cytoplasm. The enzyme catalyses (S)-4-amino-5-oxopentanoate = 5-aminolevulinate. It functions in the pathway porphyrin-containing compound metabolism; protoporphyrin-IX biosynthesis; 5-aminolevulinate from L-glutamyl-tRNA(Glu): step 2/2. This chain is Glutamate-1-semialdehyde 2,1-aminomutase 2, found in Listeria innocua serovar 6a (strain ATCC BAA-680 / CLIP 11262).